The following is a 167-amino-acid chain: SsrA-binding protein (167 aa).

The segment at 137–167 (GKQSHDKRDAAKERDWQRDKQRVMRRHNRDA) is disordered. The span at 139–158 (QSHDKRDAAKERDWQRDKQR) shows a compositional bias: basic and acidic residues.

The protein belongs to the SmpB family.

Its subcellular location is the cytoplasm. Its function is as follows. Required for rescue of stalled ribosomes mediated by trans-translation. Binds to transfer-messenger RNA (tmRNA), required for stable association of tmRNA with ribosomes. tmRNA and SmpB together mimic tRNA shape, replacing the anticodon stem-loop with SmpB. tmRNA is encoded by the ssrA gene; the 2 termini fold to resemble tRNA(Ala) and it encodes a 'tag peptide', a short internal open reading frame. During trans-translation Ala-aminoacylated tmRNA acts like a tRNA, entering the A-site of stalled ribosomes, displacing the stalled mRNA. The ribosome then switches to translate the ORF on the tmRNA; the nascent peptide is terminated with the 'tag peptide' encoded by the tmRNA and targeted for degradation. The ribosome is freed to recommence translation, which seems to be the essential function of trans-translation. The chain is SsrA-binding protein from Xanthomonas campestris pv. campestris (strain 8004).